Reading from the N-terminus, the 68-residue chain is Protein SlyX homolog (68 aa).

This sequence belongs to the SlyX family.

This is Protein SlyX homolog from Brucella anthropi (strain ATCC 49188 / DSM 6882 / CCUG 24695 / JCM 21032 / LMG 3331 / NBRC 15819 / NCTC 12168 / Alc 37) (Ochrobactrum anthropi).